The chain runs to 142 residues: MVLSPTDKSNVKAAWEKVGAHAGDYGAEALERMFLSFPTTKTYFPHFDLSHGSTQVKGHGKKVADALTNAVLHVDDMPSALSALSDLHAHKLRVDPVNFKLLRHCLLVTLACHHPAEFTPAVHASLDKFMASVSTVLTSKYR.

The 141-residue stretch at Val-2–Arg-142 folds into the Globin domain. An O2-binding site is contributed by His-59. His-88 serves as a coordination point for heme b.

It belongs to the globin family. Heterotetramer of two alpha chains and two beta chains. Red blood cells.

Its function is as follows. Involved in oxygen transport from the lung to the various peripheral tissues. The protein is Hemoglobin subunit alpha-B (HBAB) of Otolemur crassicaudatus (Brown greater galago).